We begin with the raw amino-acid sequence, 37 residues long: Large ribosomal subunit protein bL36c (37 aa).

This sequence belongs to the bacterial ribosomal protein bL36 family.

It localises to the plastid. Its subcellular location is the chloroplast. This is Large ribosomal subunit protein bL36c from Pelargonium hortorum (Common geranium).